A 415-amino-acid polypeptide reads, in one-letter code: MDELLEKAKKVREAWDVLRNATTREKNKAIKKIAEKLDEKRKEILEANKIDVEKARERGVKESLVDRLALNDKRIDEMIKACETVIGLKDPVGEVIDSWVREDGLRIARVRVPIGPIGIIYESRPNVTVETTILALKSGNTILLRGGSDALNSNKAIVLAIKEALRETEVPESSVEFIENTDRSLVLEMIRLREYLSLVIPRGGYGLISFVRDNATVPVLETGVGNCHIFVDESADLKKAVPVIINAKTQRPGTCNAAEKLLVHEKIAKEFLPVIVEELRKHGVEVRGCEKTREIVPDVVPATEEDWPTEYLDLIIAIKVVRDVDEAIEHIKKYSTGHSESILTENYSNAKKFVSEIDAAAVYVNASTRFTDGGQFGFGAEIGISTQRFHARGPVGLRELTTYKFVVLGNYHVRE.

Belongs to the gamma-glutamyl phosphate reductase family.

It localises to the cytoplasm. It catalyses the reaction L-glutamate 5-semialdehyde + phosphate + NADP(+) = L-glutamyl 5-phosphate + NADPH + H(+). It participates in amino-acid biosynthesis; L-proline biosynthesis; L-glutamate 5-semialdehyde from L-glutamate: step 2/2. Its function is as follows. Catalyzes the NADPH-dependent reduction of L-glutamate 5-phosphate into L-glutamate 5-semialdehyde and phosphate. The product spontaneously undergoes cyclization to form 1-pyrroline-5-carboxylate. The sequence is that of Gamma-glutamyl phosphate reductase from Thermotoga petrophila (strain ATCC BAA-488 / DSM 13995 / JCM 10881 / RKU-1).